The chain runs to 415 residues: MTNPVLNPALPAMAAAPVAATPSAVGSAGIVAPVFLRFDEPLPLASGQTLNGYELAIETYGTLNAQRTNAVLVCHALNASHHVAGVSADNPKDVGWWDNMVGPGKPVDTNRYFVIGVNNLGSCFGSTGPASINPATGRPWGAAFPVLTVEDWVRAQARVADHFGIERFAAVMGGSLGGMQALSWAITCPQRVANCVVVASTPRLSAQNIGFNEVARRAIITDPDFHGGDYYAHGTVPGRGLSVARMIGHITYLSDDDMAEKFGRTRREPAADGAYRYGYDVEFEVESYLRYQGEKFSRYFDANTYLLITRALDYFDPARATGGDLARALAPATADFLLVSFSTDWRFPPERSREMVRALLKNGSPVTYAEIDAPHGHDAFLLDDARYHAVVRGYYERIARELGLNGAVAPEGNSA.

The region spanning 69 to 383 (NAVLVCHALN…PHGHDAFLLD (315 aa)) is the AB hydrolase-1 domain. S175 acts as the Nucleophile in catalysis. Substrate is bound at residue R245. Residues D344 and H377 contribute to the active site. D378 lines the substrate pocket.

This sequence belongs to the AB hydrolase superfamily. MetX family. Homodimer.

It is found in the cytoplasm. The enzyme catalyses L-homoserine + succinyl-CoA = O-succinyl-L-homoserine + CoA. It functions in the pathway amino-acid biosynthesis; L-methionine biosynthesis via de novo pathway; O-succinyl-L-homoserine from L-homoserine: step 1/1. In terms of biological role, transfers a succinyl group from succinyl-CoA to L-homoserine, forming succinyl-L-homoserine. This Bordetella pertussis (strain Tohama I / ATCC BAA-589 / NCTC 13251) protein is Homoserine O-succinyltransferase.